Here is a 247-residue protein sequence, read N- to C-terminus: UPF0309 protein Teth39_1980 (247 aa).

Positions Ile-31–Lys-213 constitute an SIS domain.

The protein belongs to the UPF0309 family.

The sequence is that of UPF0309 protein Teth39_1980 from Thermoanaerobacter pseudethanolicus (strain ATCC 33223 / 39E) (Clostridium thermohydrosulfuricum).